We begin with the raw amino-acid sequence, 268 residues long: 4-hydroxy-tetrahydrodipicolinate reductase (268 aa).

Residues 10 to 15 (GSTGRM), Glu-36, 99 to 101 (GTT), and 123 to 126 (APNM) each bind NAD(+). Catalysis depends on His-156, which acts as the Proton donor/acceptor. His-157 lines the (S)-2,3,4,5-tetrahydrodipicolinate pocket. The Proton donor role is filled by Lys-160. 166 to 167 (GT) contributes to the (S)-2,3,4,5-tetrahydrodipicolinate binding site.

It belongs to the DapB family.

The protein localises to the cytoplasm. The catalysed reaction is (S)-2,3,4,5-tetrahydrodipicolinate + NAD(+) + H2O = (2S,4S)-4-hydroxy-2,3,4,5-tetrahydrodipicolinate + NADH + H(+). It carries out the reaction (S)-2,3,4,5-tetrahydrodipicolinate + NADP(+) + H2O = (2S,4S)-4-hydroxy-2,3,4,5-tetrahydrodipicolinate + NADPH + H(+). It participates in amino-acid biosynthesis; L-lysine biosynthesis via DAP pathway; (S)-tetrahydrodipicolinate from L-aspartate: step 4/4. In terms of biological role, catalyzes the conversion of 4-hydroxy-tetrahydrodipicolinate (HTPA) to tetrahydrodipicolinate. The polypeptide is 4-hydroxy-tetrahydrodipicolinate reductase (Nitrosomonas europaea (strain ATCC 19718 / CIP 103999 / KCTC 2705 / NBRC 14298)).